Consider the following 349-residue polypeptide: Very-long-chain 3-oxoacyl-CoA reductase (349 aa).

Residues 29–49 (AASLVFATGGLFLLSRGLSFL) traverse the membrane as a helical segment. Positions 74, 129, 137, 156, 223, 227, 256, and 258 each coordinate NADP(+). Y223 (proton donor) is an active-site residue. K227 acts as the Lowers pKa of active site Tyr in catalysis.

This sequence belongs to the short-chain dehydrogenases/reductases (SDR) family.

It localises to the endoplasmic reticulum membrane. The enzyme catalyses a very-long-chain (3R)-3-hydroxyacyl-CoA + NADP(+) = a very-long-chain 3-oxoacyl-CoA + NADPH + H(+). It functions in the pathway lipid metabolism; fatty acid biosynthesis. Component of the microsomal membrane bound fatty acid elongation system, which produces the 26-carbon very long-chain fatty acids (VLCFA) from palmitate. Catalyzes the reduction of the 3-ketoacyl-CoA intermediate that is formed in each cycle of fatty acid elongation. VLCFAs serve as precursors for ceramide and sphingolipids. In Coccidioides immitis (strain RS) (Valley fever fungus), this protein is Very-long-chain 3-oxoacyl-CoA reductase.